The following is a 204-amino-acid chain: Guanylate kinase (204 aa).

A Guanylate kinase-like domain is found at 4 to 182 (GMLVVVSGPS…AVNDLEAVLT (179 aa)). 11-18 (GPSGAGKG) contacts ATP.

The protein belongs to the guanylate kinase family.

Its subcellular location is the cytoplasm. It carries out the reaction GMP + ATP = GDP + ADP. Its function is as follows. Essential for recycling GMP and indirectly, cGMP. This is Guanylate kinase from Carboxydothermus hydrogenoformans (strain ATCC BAA-161 / DSM 6008 / Z-2901).